We begin with the raw amino-acid sequence, 348 residues long: Ribonuclease H (348 aa).

Residues 54–65 (NTTSNYGSSTHA) are compositionally biased toward polar residues. Positions 54–81 (NTTSNYGSSTHAGGQVSKPHTTQKRVHR) are disordered. An RNase H type-1 domain is found at 184-346 (YNKSMNVYCD…ADFLAKKGAS (163 aa)). Asp-193, Glu-235, Asp-264, and Asp-338 together coordinate Mg(2+).

It belongs to the RNase H family. Mg(2+) is required as a cofactor.

The enzyme catalyses Endonucleolytic cleavage to 5'-phosphomonoester.. Endonuclease that specifically degrades the RNA of RNA-DNA hybrids. The sequence is that of Ribonuclease H (RNH1) from Saccharomyces cerevisiae (strain ATCC 204508 / S288c) (Baker's yeast).